The chain runs to 242 residues: Triosephosphate isomerase (242 aa).

Substrate is bound at residue 9-11; that stretch reads NWK. Residue H99 is the Electrophile of the active site. The active-site Proton acceptor is the E169. Substrate is bound by residues G175, S207, and 228–229; that span reads GG.

It belongs to the triosephosphate isomerase family. In terms of assembly, homodimer.

Its subcellular location is the cytoplasm. It carries out the reaction D-glyceraldehyde 3-phosphate = dihydroxyacetone phosphate. The protein operates within carbohydrate biosynthesis; gluconeogenesis. Its pathway is carbohydrate degradation; glycolysis; D-glyceraldehyde 3-phosphate from glycerone phosphate: step 1/1. In terms of biological role, involved in the gluconeogenesis. Catalyzes stereospecifically the conversion of dihydroxyacetone phosphate (DHAP) to D-glyceraldehyde-3-phosphate (G3P). This is Triosephosphate isomerase from Mycoplasma mobile (strain ATCC 43663 / 163K / NCTC 11711) (Mesomycoplasma mobile).